The following is a 320-amino-acid chain: Lipoyl synthase (320 aa).

Residues 1-27 (MRVEIDHRNSGGGKLRHPEKQHRPDNP) form a disordered region. Positions 16 to 25 (RHPEKQHRPD) are enriched in basic and acidic residues. [4Fe-4S] cluster contacts are provided by C61, C66, C72, C87, C91, C94, and S300. In terms of domain architecture, Radical SAM core spans 73–289 (WSQRHATMMI…AAMARAKGFL (217 aa)).

Belongs to the radical SAM superfamily. Lipoyl synthase family. Requires [4Fe-4S] cluster as cofactor.

It localises to the cytoplasm. It catalyses the reaction [[Fe-S] cluster scaffold protein carrying a second [4Fe-4S](2+) cluster] + N(6)-octanoyl-L-lysyl-[protein] + 2 oxidized [2Fe-2S]-[ferredoxin] + 2 S-adenosyl-L-methionine + 4 H(+) = [[Fe-S] cluster scaffold protein] + N(6)-[(R)-dihydrolipoyl]-L-lysyl-[protein] + 4 Fe(3+) + 2 hydrogen sulfide + 2 5'-deoxyadenosine + 2 L-methionine + 2 reduced [2Fe-2S]-[ferredoxin]. It participates in protein modification; protein lipoylation via endogenous pathway; protein N(6)-(lipoyl)lysine from octanoyl-[acyl-carrier-protein]: step 2/2. Its function is as follows. Catalyzes the radical-mediated insertion of two sulfur atoms into the C-6 and C-8 positions of the octanoyl moiety bound to the lipoyl domains of lipoate-dependent enzymes, thereby converting the octanoylated domains into lipoylated derivatives. The polypeptide is Lipoyl synthase (Acidiphilium cryptum (strain JF-5)).